The sequence spans 185 residues: UPF0149 protein XF_2010 (185 aa).

The protein belongs to the UPF0149 family.

The sequence is that of UPF0149 protein XF_2010 from Xylella fastidiosa (strain 9a5c).